A 247-amino-acid polypeptide reads, in one-letter code: ATP synthase subunit a, chloroplastic (247 aa).

5 consecutive transmembrane segments (helical) span residues 36–56, 95–115, 134–154, 199–219, and 220–240; these read GQVL…SIFG, VPFI…GALV, INTT…AGFS, LVVG…LMLL, and GLFT…AYIG.

The protein belongs to the ATPase A chain family. F-type ATPases have 2 components, CF(1) - the catalytic core - and CF(0) - the membrane proton channel. CF(1) has five subunits: alpha(3), beta(3), gamma(1), delta(1), epsilon(1). CF(0) has four main subunits: a, b, b' and c.

The protein localises to the plastid. It localises to the chloroplast thylakoid membrane. In terms of biological role, key component of the proton channel; it plays a direct role in the translocation of protons across the membrane. In Mesostigma viride (Green alga), this protein is ATP synthase subunit a, chloroplastic.